The primary structure comprises 675 residues: Protein PALS1 (675 aa).

Disordered stretches follow at residues 1–34 and 51–78; these read MTTS…KHRE and RRSA…KKQE. The segment at 1-345 is required for the correct localization of PALS1 and PATJ at cell-cell contacts and the normal formation of tight junctions and adherens junctions; the sequence is MTTSHMNGHV…QQIKPPPAKE (345 aa). Basic and acidic residues-rich tracts occupy residues 10–34 and 54–78; these read VTEE…KHRE and AQLE…KKQE. A phosphoserine mark is found at serine 14 and serine 25. The segment at 21-140 is interaction with PARD6B; it reads VDLASPEEHQ…LKHIQHTLVD (120 aa). Phosphoserine occurs at positions 83 and 84. L27 domains are found at residues 120–177 and 179–235; these read KILE…NKAS and PFPL…MQLE. The segment at 181–243 is interaction with LIN7C; sequence PLISNAQDLA…LEPITDERVY (63 aa). In terms of domain architecture, PDZ spans 256-336; that stretch reads IVRIEKARDI…TLTFVLIPSQ (81 aa). The region spanning 345-417 is the SH3 domain; that stretch reads ETVIHVKAHF…PGKSFQQQRE (73 aa). A Guanylate kinase-like domain is found at 479–660; the sequence is KRPIILIGPQ…AYQELLRLIN (182 aa). Position 486-493 (486-493) interacts with ATP; that stretch reads GPQNCGQN.

The protein belongs to the MAGUK family. In terms of assembly, heterodimer with MPP1. Forms a heterotrimeric complex composed of PALS1, LIN7B and PATJ; the N-terminal L27 domain of PALS1 interacts with the L27 domain of PATJ and the C-terminal L27 domain of PALS1 interacts with the L27 domain of LIN7B. Component of a complex composed of PALS1, CRB1 and MPP4. Component of a complex whose core is composed of ARHGAP17, AMOT, PALS1, PATJ and PARD3/PAR3. Component of a complex composed of PALS1, CRB1 and EPB41L5. Within the complex, interacts (via HOOK domain) with EPB41L5 (via FERM domain), and interacts with CRB1 (via intracellular domain). Component of a complex composed of PALS1, MPP3 and CRB1; PALS1 acts as a bridging protein between MPP3 (via guanylate kinase-like domain) and CRB1. Component of a complex composed of CRB3, PALS1 and PATJ. As part of the Crumbs complex; interacts with WWP1, the interaction is enhanced by AMOTL2 and facilitates WWP1 localization to the plasma membrane. The Crumbs complex promotes monoubiquitination of AMOTL2 by WWP1, which activates the Hippo signaling pathway. Interacts (via PDZ domain) with PATJ (via N-terminus). Interacts with EZR. Interacts (via PDZ domain) with CRB1 (via C-terminal ERLI motif). While the PDZ domain is sufficient for interaction with CRB1, the adjacent SH3 and guanylate kinase-like domains are likely to contribute to a high affinity interaction. Interacts with WWTR1/TAZ (via WW domain). Interacts with MPP7. Interacts (via PDZ domain) with CRB3 (via C-terminus). Interacts with LIN7C. Interacts with MPDZ. Interacts with PARD6B. Interacts with SC6A1. Interacts with CDH5; the interaction promotes PALS1 localization to cell junctions and is required for CDH5-mediated vascular lumen formation and endothelial cell. Interacts with NPHP1 (via coiled coil and SH3 domains). Interacts with NPHP4. Interacts with CRB2. (Microbial infection) Interacts (via PDZ domain) with human coronaviruses SARS-CoV and, probably, SARS-CoV-2 envelope small membrane protein E (via C-terminus); this inhibits the interaction between PALS1 and CRB3. Expressed at the outer limiting membrane in the retina (at protein level). Expressed in T lymphocytes (at protein level). Expressed in the kidney (at protein level).

Its subcellular location is the golgi apparatus. The protein resides in the cell membrane. It localises to the endomembrane system. It is found in the cell junction. The protein localises to the tight junction. Its subcellular location is the adherens junction. The protein resides in the cell projection. It localises to the axon. It is found in the perikaryon. The protein localises to the apical cell membrane. Its subcellular location is the endoplasmic reticulum-Golgi intermediate compartment. In terms of biological role, plays a role in tight junction biogenesis and in the establishment of cell polarity in epithelial cells. Also involved in adherens junction biogenesis by ensuring correct localization of the exocyst complex protein EXOC4/SEC8 which allows trafficking of adherens junction structural component CDH1 to the cell surface. Plays a role through its interaction with CDH5 in vascular lumen formation and endothelial membrane polarity. Required during embryonic and postnatal retinal development. Required for the maintenance of cerebellar progenitor cells in an undifferentiated proliferative state, preventing premature differentiation, and is required for cerebellar histogenesis, fissure formation, cerebellar layer organization and cortical development. Plays a role in neuronal progenitor cell survival, potentially via promotion of mTOR signaling. Plays a role in the radial and longitudinal extension of the myelin sheath in Schwann cells. May modulate SC6A1/GAT1-mediated GABA uptake by stabilizing the transporter. Plays a role in the T-cell receptor-mediated activation of NF-kappa-B. Required for localization of EZR to the apical membrane of parietal cells and may play a role in the dynamic remodeling of the apical cytoskeleton. Required for the normal polarized localization of the vesicular marker STX4. Required for the correct trafficking of the myelin proteins PMP22 and MAG. Involved in promoting phosphorylation and cytoplasmic retention of transcriptional coactivators YAP1 and WWTR1/TAZ which leads to suppression of TGFB1-dependent transcription of target genes such as CCN2/CTGF, SERPINE1/PAI1, SNAI1/SNAIL1 and SMAD7. (Microbial infection) Acts as an interaction partner for human coronaviruses SARS-CoV and, probably, SARS-CoV-2 envelope protein E which results in delayed formation of tight junctions and disregulation of cell polarity. The chain is Protein PALS1 from Homo sapiens (Human).